The primary structure comprises 181 residues: ATP synthase subunit b (181 aa).

A helical transmembrane segment spans residues 12-32 (LPAVYDIVWSAVVFVVLLVVI).

It belongs to the ATPase B chain family. In terms of assembly, F-type ATPases have 2 components, F(1) - the catalytic core - and F(0) - the membrane proton channel. F(1) has five subunits: alpha(3), beta(3), gamma(1), delta(1), epsilon(1). F(0) has three main subunits: a(1), b(2) and c(10-14). The alpha and beta chains form an alternating ring which encloses part of the gamma chain. F(1) is attached to F(0) by a central stalk formed by the gamma and epsilon chains, while a peripheral stalk is formed by the delta and b chains.

It localises to the cell membrane. F(1)F(0) ATP synthase produces ATP from ADP in the presence of a proton or sodium gradient. F-type ATPases consist of two structural domains, F(1) containing the extramembraneous catalytic core and F(0) containing the membrane proton channel, linked together by a central stalk and a peripheral stalk. During catalysis, ATP synthesis in the catalytic domain of F(1) is coupled via a rotary mechanism of the central stalk subunits to proton translocation. Its function is as follows. Component of the F(0) channel, it forms part of the peripheral stalk, linking F(1) to F(0). The protein is ATP synthase subunit b of Clavibacter sepedonicus (Clavibacter michiganensis subsp. sepedonicus).